A 415-amino-acid polypeptide reads, in one-letter code: L-cysteine:1D-myo-inositol 2-amino-2-deoxy-alpha-D-glucopyranoside ligase (415 aa).

Residue cysteine 47 coordinates Zn(2+). L-cysteinyl-5'-AMP contacts are provided by residues 47–50, threonine 62, and 85–87; these read CGIT and NVT. The short motif at 49–59 is the 'HIGH' region element; sequence ITPYDATHLGH. A 'ERGGDP' region motif is present at residues 190-195; the sequence is ERGGDP. Residue tryptophan 230 coordinates L-cysteinyl-5'-AMP. Cysteine 234 is a Zn(2+) binding site. 252–254 is a binding site for L-cysteinyl-5'-AMP; the sequence is GSD. Residue histidine 259 coordinates Zn(2+). Isoleucine 286 is an L-cysteinyl-5'-AMP binding site. Positions 292 to 296 match the 'KMSKS' region motif; it reads KMSKS.

This sequence belongs to the class-I aminoacyl-tRNA synthetase family. MshC subfamily. As to quaternary structure, monomer. It depends on Zn(2+) as a cofactor.

It catalyses the reaction 1D-myo-inositol 2-amino-2-deoxy-alpha-D-glucopyranoside + L-cysteine + ATP = 1D-myo-inositol 2-(L-cysteinylamino)-2-deoxy-alpha-D-glucopyranoside + AMP + diphosphate + H(+). In terms of biological role, catalyzes the ATP-dependent condensation of GlcN-Ins and L-cysteine to form L-Cys-GlcN-Ins. The polypeptide is L-cysteine:1D-myo-inositol 2-amino-2-deoxy-alpha-D-glucopyranoside ligase (mshC) (Mycolicibacterium paratuberculosis (strain ATCC BAA-968 / K-10) (Mycobacterium paratuberculosis)).